The following is a 435-amino-acid chain: NADH-quinone oxidoreductase subunit D (435 aa).

The protein belongs to the complex I 49 kDa subunit family. As to quaternary structure, NDH-1 is composed of 14 different subunits. Subunits NuoB, C, D, E, F, and G constitute the peripheral sector of the complex.

Its subcellular location is the cell inner membrane. It catalyses the reaction a quinone + NADH + 5 H(+)(in) = a quinol + NAD(+) + 4 H(+)(out). Its function is as follows. NDH-1 shuttles electrons from NADH, via FMN and iron-sulfur (Fe-S) centers, to quinones in the respiratory chain. The immediate electron acceptor for the enzyme in this species is believed to be ubiquinone. Couples the redox reaction to proton translocation (for every two electrons transferred, four hydrogen ions are translocated across the cytoplasmic membrane), and thus conserves the redox energy in a proton gradient. The protein is NADH-quinone oxidoreductase subunit D of Xylella fastidiosa (strain M12).